Consider the following 556-residue polypeptide: (S)-N-methylcanadine 1-hydroxylase CYP82Y1 (556 aa).

The chain crosses the membrane as a helical span at residues 18–38; that stretch reads TAVGTLILAFLLTLSPVIIYY. Cys-500 contributes to the heme binding site.

Belongs to the cytochrome P450 family. The cofactor is heme. As to expression, highly expressed in capsules. Expressed is stems.

The protein localises to the membrane. The enzyme catalyses (S)-cis-N-methylcanadine + reduced [NADPH--hemoprotein reductase] + O2 = (S)-1-hydroxy-N-methylcanadine + oxidized [NADPH--hemoprotein reductase] + H2O + H(+). Its pathway is alkaloid biosynthesis. Functionally, cytochrome P450 involved in the biosynthesis of the benzylisoquinoline alkaloid noscapine. Converts (S)-N-methylcanadine to (S)-1-hydroxy-N-methylcanadine. The chain is (S)-N-methylcanadine 1-hydroxylase CYP82Y1 from Papaver somniferum (Opium poppy).